Reading from the N-terminus, the 287-residue chain is Pantothenate synthetase (287 aa).

30–37 contributes to the ATP binding site; it reads MGNLHSGH. Histidine 37 (proton donor) is an active-site residue. Glutamine 61 is a binding site for (R)-pantoate. Beta-alanine is bound at residue glutamine 61. ATP is bound at residue 149–152; the sequence is GEKD. A (R)-pantoate-binding site is contributed by glutamine 155. ATP is bound by residues valine 178 and 186–189; that span reads LSSR.

This sequence belongs to the pantothenate synthetase family. Homodimer.

It is found in the cytoplasm. The enzyme catalyses (R)-pantoate + beta-alanine + ATP = (R)-pantothenate + AMP + diphosphate + H(+). It functions in the pathway cofactor biosynthesis; (R)-pantothenate biosynthesis; (R)-pantothenate from (R)-pantoate and beta-alanine: step 1/1. Catalyzes the condensation of pantoate with beta-alanine in an ATP-dependent reaction via a pantoyl-adenylate intermediate. The sequence is that of Pantothenate synthetase from Pseudomonas entomophila (strain L48).